A 328-amino-acid chain; its full sequence is Carbonic anhydrase-related protein 11 (328 aa).

The N-terminal stretch at 1 to 22 is a signal peptide; sequence MGAAARLSAPRALVLWAALGAA. The 271-residue stretch at 33–303 folds into the Alpha-carbonic anhydrase domain; it reads DWWSYKDNLQ…LAHRALRGNR (271 aa). 3 N-linked (GlcNAc...) asparagine glycosylation sites follow: Asn-118, Asn-170, and Asn-260. Residues 300–328 are disordered; sequence RGNRDPRHPERRCRGPNYRLHVDGAPHGR. Basic and acidic residues predominate over residues 319 to 328; the sequence is LHVDGAPHGR.

It belongs to the alpha-carbonic anhydrase family.

The protein resides in the secreted. Functionally, does not have a catalytic activity. The polypeptide is Carbonic anhydrase-related protein 11 (CA11) (Bos taurus (Bovine)).